The sequence spans 280 residues: Formyltetrahydrofolate deformylase (280 aa).

The 79-residue stretch at 8 to 86 (VLRTICPDQK…RELNPAGRRR (79 aa)) folds into the ACT domain. Residue Asp225 is part of the active site.

This sequence belongs to the PurU family. As to quaternary structure, homohexamer.

It carries out the reaction (6R)-10-formyltetrahydrofolate + H2O = (6S)-5,6,7,8-tetrahydrofolate + formate + H(+). The protein operates within purine metabolism; IMP biosynthesis via de novo pathway; formate from 10-formyl-5,6,7,8-tetrahydrofolate: step 1/1. Its activity is regulated as follows. Activated by methionine, inhibited by glycine. Its function is as follows. Catalyzes the hydrolysis of 10-formyltetrahydrofolate (formyl-FH4) to formate and tetrahydrofolate (FH4). Provides the major source of formate for the PurT-dependent synthesis of 5'-phosphoribosyl-N-formylglycinamide (FGAR) during aerobic growth. Has a role in regulating the one-carbon pool. The polypeptide is Formyltetrahydrofolate deformylase (Escherichia coli (strain K12)).